A 502-amino-acid polypeptide reads, in one-letter code: uncharacterized protein (502 aa).

A helical membrane pass occupies residues 1–21 (MKIFLVFLSVFFFNGCFGLVY). PLD phosphodiesterase domains lie at 162–189 (IKKR…GDNY) and 396–423 (TKHS…DPRS).

Belongs to the phospholipase D family. Cardiolipin synthase subfamily.

It localises to the cell membrane. This is an uncharacterized protein from Helicobacter pylori (strain ATCC 700392 / 26695) (Campylobacter pylori).